The primary structure comprises 78 residues: Gas vesicle protein A (78 aa).

An alpha helix 1 region spans residues 9 to 19; sequence LAEVLDRVLDK. The interval 23 to 31 is beta-strand 1; the sequence is VDVWARISL. The interval 32–34 is beta turn; sequence VGI. A beta-strand 2 region spans residues 35–43; it reads EILTVEARV. An alpha helix 2 region spans residues 48-67; the sequence is VDTFLHYAEEIAKIEQAELT.

This sequence belongs to the gas vesicle GvpA family. In terms of assembly, the gas vesicle shell is 2 nm thick and consists of a single layer of this protein. It forms helical ribs nearly perpendicular to the long axis of the vesicle. Modeled as antiparallel homodimers.

Its subcellular location is the gas vesicle shell. In terms of biological role, gas vesicles are hollow, gas filled proteinaceous nanostructures found in some microorganisms. During planktonic growth they allow positioning of the organism at a favorable depth for light or nutrient acquisition. GvpA forms the protein shell. This gene replaces p-gvpA of H.salinarum very poorly, only about 1% of GVs are formed; the few gas vesicles formed are quite strong with a very high critical collapse pressure (CCP) of 0.213 MPa. Its function is as follows. Expression of a 9.5 kb mc-vac DNA fragment containing 2 divergently transcribed regions (gvpD-gvpE-gvpF-gvpG-gvpH-gvpI-gvpJ-gvpK-gvpL-gvpM and gvpA-gvpC-gvpN-gvpO) allows H.volcanii to produce gas vesicles. In Haloferax mediterranei (strain ATCC 33500 / DSM 1411 / JCM 8866 / NBRC 14739 / NCIMB 2177 / R-4) (Halobacterium mediterranei), this protein is Gas vesicle protein A.